The primary structure comprises 110 residues: UPF0060 membrane protein RSp1275 (110 aa).

The next 4 membrane-spanning stretches (helical) occupy residues 8-28, 33-53, 63-83, and 90-110; these read FLFA…WLVL, SAWL…LLTL, AAYG…VDGA, and IGGA…PQPT.

It belongs to the UPF0060 family.

It is found in the cell inner membrane. The chain is UPF0060 membrane protein RSp1275 from Ralstonia nicotianae (strain ATCC BAA-1114 / GMI1000) (Ralstonia solanacearum).